A 526-amino-acid polypeptide reads, in one-letter code: GMP synthase [glutamine-hydrolyzing] (526 aa).

In terms of domain architecture, Glutamine amidotransferase type-1 spans 13–204 (TVLVVDFGAQ…LYRGAGLSPD (192 aa)). The active-site Nucleophile is the cysteine 90. Residues histidine 178 and glutamate 180 contribute to the active site. One can recognise a GMPS ATP-PPase domain in the interval 205 to 400 (WTTGNVIEEQ…LGLPDEIVQR (196 aa)). Residue 232–238 (SGGVDSA) participates in ATP binding.

In terms of assembly, homodimer.

It carries out the reaction XMP + L-glutamine + ATP + H2O = GMP + L-glutamate + AMP + diphosphate + 2 H(+). It functions in the pathway purine metabolism; GMP biosynthesis; GMP from XMP (L-Gln route): step 1/1. Catalyzes the synthesis of GMP from XMP. The chain is GMP synthase [glutamine-hydrolyzing] (guaA) from Streptomyces coelicolor (strain ATCC BAA-471 / A3(2) / M145).